The following is a 586-amino-acid chain: GRB2-associated-binding protein 3 (586 aa).

The PH domain occupies 5–117 (DAVCTGWLVK…WVHSISQVCN (113 aa)). Disordered regions lie at residues 149-171 (AHAA…TEET) and 281-335 (SSTI…KKPE). Residues 283 to 292 (TIQVDKNQGS) show a composition bias toward polar residues. Over residues 316–326 (HLSERRQEEWS) the composition is skewed to basic and acidic residues. At S344 the chain carries Phosphoserine. Positions 401-453 (GASGLGPHCSPDDYIPMNSGSISSPLPELPANLEPPPVNRDLKPQRKSRPPPL) are disordered. Residue S482 is modified to Phosphoserine.

This sequence belongs to the GAB family. Interacts with PIK3R/p85, SHP2 and GRAP2/MONA. May interact with Grb2. Post-translationally, phosphorylated on tyrosine residue(s) after macrophage colony-stimulating factor (M-CSF) receptor stimulation.

The sequence is that of GRB2-associated-binding protein 3 (GAB3) from Homo sapiens (Human).